The chain runs to 237 residues: MTDPHPNRPHRNFYGRRKGHDLRDSQERYLAEDLAKLSPGAVDWDVNPDRTPLDLKERFGGKDIWLEVGFGGGEHLVHQAASNPDVAIIGCEPYINGVAMLLGKIRAAGVGNLAVYPGDARDLFDVLPKGSVAKAFLLYPDPWPKARHHRRRFVTTEHLEPLHRAMRPGAEFRVATDIEDYVRQTMEEVPKAGFEWLAEAASDWREPWCDWVSTRYEQKALREGRVPHYMTFQKRSL.

E67, E92, D119, and D141 together coordinate S-adenosyl-L-methionine. D141 is a catalytic residue. Substrate is bound by residues K145, D177, and 214-217 (TRYE).

Belongs to the class I-like SAM-binding methyltransferase superfamily. TrmB family.

The enzyme catalyses guanosine(46) in tRNA + S-adenosyl-L-methionine = N(7)-methylguanosine(46) in tRNA + S-adenosyl-L-homocysteine. The protein operates within tRNA modification; N(7)-methylguanine-tRNA biosynthesis. Catalyzes the formation of N(7)-methylguanine at position 46 (m7G46) in tRNA. The sequence is that of tRNA (guanine-N(7)-)-methyltransferase from Jannaschia sp. (strain CCS1).